The following is a 92-amino-acid chain: UPF0728 protein C10orf53 homolog (92 aa).

This sequence belongs to the UPF0728 family.

The chain is UPF0728 protein C10orf53 homolog from Danio rerio (Zebrafish).